A 216-amino-acid polypeptide reads, in one-letter code: Pyrophosphatase PpaX (216 aa).

Asp9 (nucleophile) is an active-site residue.

It belongs to the HAD-like hydrolase superfamily. PpaX family. Mg(2+) is required as a cofactor.

It catalyses the reaction diphosphate + H2O = 2 phosphate + H(+). Its function is as follows. Hydrolyzes pyrophosphate formed during P-Ser-HPr dephosphorylation by HPrK/P. Might play a role in controlling the intracellular pyrophosphate pool. This Bacillus anthracis (strain A0248) protein is Pyrophosphatase PpaX.